The primary structure comprises 255 residues: tRNA (guanine-N(7)-)-methyltransferase (255 aa).

Over residues 1 to 11 the composition is skewed to basic and acidic residues; the sequence is MSISDNSRDQL. Residues 1-25 are disordered; it reads MSISDNSRDQLGELPAGRPLQSDFD. Residues glutamate 83, glutamate 108, aspartate 135, and aspartate 158 each coordinate S-adenosyl-L-methionine. Aspartate 158 is an active-site residue. Lysine 162 is a binding site for substrate. Residues 164 to 169 are interaction with RNA; the sequence is RHNKRR. Residues aspartate 194 and 232–235 each bind substrate; that span reads TKFE.

This sequence belongs to the class I-like SAM-binding methyltransferase superfamily. TrmB family.

The enzyme catalyses guanosine(46) in tRNA + S-adenosyl-L-methionine = N(7)-methylguanosine(46) in tRNA + S-adenosyl-L-homocysteine. It functions in the pathway tRNA modification; N(7)-methylguanine-tRNA biosynthesis. Catalyzes the formation of N(7)-methylguanine at position 46 (m7G46) in tRNA. This chain is tRNA (guanine-N(7)-)-methyltransferase, found in Corynebacterium glutamicum (strain ATCC 13032 / DSM 20300 / JCM 1318 / BCRC 11384 / CCUG 27702 / LMG 3730 / NBRC 12168 / NCIMB 10025 / NRRL B-2784 / 534).